The following is a 311-amino-acid chain: 1,4-dihydroxy-2-naphthoate octaprenyltransferase (311 aa).

9 helical membrane passes run 31-51, 53-73, 104-126, 131-153, 157-177, 182-202, 220-240, 242-262, and 290-310; these read LTAS…YVKV, LLLF…TNLF, TILQ…ICAS, LALI…LPIA, FGEL…SFFI, INMQ…AINL, LAIL…FAVA, IWVV…VVFL, and TAQT…ISYF.

This sequence belongs to the MenA family. Type 1 subfamily.

Its subcellular location is the cell membrane. The catalysed reaction is an all-trans-polyprenyl diphosphate + 1,4-dihydroxy-2-naphthoate + H(+) = a 2-demethylmenaquinol + CO2 + diphosphate. The protein operates within quinol/quinone metabolism; menaquinone biosynthesis; menaquinol from 1,4-dihydroxy-2-naphthoate: step 1/2. Its function is as follows. Conversion of 1,4-dihydroxy-2-naphthoate (DHNA) to demethylmenaquinone (DMK). This Bacillus subtilis (strain 168) protein is 1,4-dihydroxy-2-naphthoate octaprenyltransferase.